The following is a 459-amino-acid chain: Neuronal acetylcholine receptor subunit beta-2 (459 aa).

Residues 1 to 203 are Extracellular-facing; sequence LRSDFLLGPE…ITYDFVIKRK (203 aa). N-linked (GlcNAc...) asparagine glycosylation is found at asparagine 21 and asparagine 138. Residues cysteine 125 and cysteine 139 are joined by a disulfide bond. Residues 204–228 form a helical membrane-spanning segment; it reads PLFYTINLIIPCVLITSLAILVFYL. At 229–235 the chain is on the cytoplasmic side; the sequence is PSDCGEK. A helical transmembrane segment spans residues 236 to 254; sequence VTLCMSVLLALTVFLLLIS. Topologically, residues 255–269 are extracellular; that stretch reads KIVPPTSLAVPLIGK. The helical transmembrane segment at 270–291 threads the bilayer; that stretch reads YLMFTMVLVTFSIVTSVCVLNV. Residues 292 to 421 are Cytoplasmic-facing; that stretch reads HHRSPSTHYM…WKYVAMVIDR (130 aa). The helical transmembrane segment at 422–440 threads the bilayer; sequence LFLWIFILVCVVGTLGLFV.

It belongs to the ligand-gated ion channel (TC 1.A.9) family. Acetylcholine receptor (TC 1.A.9.1) subfamily. Beta-2/CHRNB2 sub-subfamily. Neuronal AChR is a heteropentamer composed of two different types of subunits: alpha and beta. CHRNB2/Beta-2 subunit can be combined to CHRNA2/alpha-2, CHRNA3/alpha-3 or CHRNA4/alpha-4, CHRNA5/alpha-5, CHRNA6/alpha-6 and CHRNB3/beta-3 to give rise to functional receptors.

It localises to the synaptic cell membrane. Its subcellular location is the cell membrane. The catalysed reaction is Ca(2+)(in) = Ca(2+)(out). It carries out the reaction K(+)(in) = K(+)(out). The enzyme catalyses Na(+)(in) = Na(+)(out). With respect to regulation, activated by a myriad of ligands such as acetylcholine, cytisine, nicotine, choline and epibatidine. nAChR activity is inhibited by the antagonist alpha-conotoxins BuIA, PnIA, PnIC, GID and MII, small disulfide-constrained peptides from cone snails. Its function is as follows. Component of neuronal acetylcholine receptors (nAChRs) that function as pentameric, ligand-gated cation channels with high calcium permeability among other activities. nAChRs are excitatory neurotrasnmitter receptors formed by a collection of nAChR subunits known to mediate synaptic transmission in the nervous system and the neuromuscular junction. Each nAchR subunit confers differential attributes to channel properties, including activation, deactivation and desensitization kinetics, pH sensitivity, cation permeability, and binding to allosteric modulators. CHRNB2 forms heteropentameric neuronal acetylcholine receptors with CHRNA2, CHRNA3, CHRNA4 and CHRNA6, as well as CHRNA5 and CHRNB3 as accesory subunits. This chain is Neuronal acetylcholine receptor subunit beta-2 (chrnb2), found in Carassius auratus (Goldfish).